The following is a 1721-amino-acid chain: Latent-transforming growth factor beta-binding protein 1 (1721 aa).

The first 23 residues, 1–23 (MAGAWLRWGLLLWAGLLASSAHG), serve as a signal peptide directing secretion. Low complexity predominate over residues 64–81 (RSSAAAGAPSRASPGVPS). The segment at 64–158 (RSSAAAGAPS…SGGGSRLQVH (95 aa)) is disordered. A compositionally biased stretch (pro residues) spans 99–111 (RPPPPPPPEPARP). Low complexity predominate over residues 112 to 130 (AVPGGQLHPNPGGHPAAAP). The 33-residue stretch at 187–219 (TKPSCVPPCQNGGMCLRPQLCVCKPGTKGKACE) folds into the EGF-like 1 domain. Intrachain disulfides connect Cys-191–Cys-201, Cys-195–Cys-207, and Cys-209–Cys-218. The tract at residues 228–259 (SPVFGGQSPGAASSWGPPEQAAKHTSSKKADT) is disordered. Asn-347 and Asn-378 each carry an N-linked (GlcNAc...) asparagine glycan. Residues 399–431 (RVVICHLPCMNGGQCSSRDKCQCPPNFTGKLCQ) form the EGF-like 2 domain. Disulfide bonds link Cys-403/Cys-413, Cys-407/Cys-419, Cys-421/Cys-430, Cys-559/Cys-581, Cys-568/Cys-594, and Cys-582/Cys-597. Asn-424 carries N-linked (GlcNAc...) asparagine glycosylation. The TB 1 domain maps to 557-609 (GRCFQETIGSQCGKALPGLSKQEDCCGTVGTSWGFNKCQKCPKKPSYHGYNQM). N-linked (GlcNAc...) asparagine glycosylation is present at Asn-620. The 38-residue stretch at 626-663 (DINECQLQGVCPNGECLNTMGSYRCTCKIGFGPDPTFS) folds into the EGF-like 3; calcium-binding domain. Disulfide bonds link Cys-630–Cys-641, Cys-636–Cys-650, Cys-652–Cys-665, Cys-679–Cys-702, Cys-689–Cys-714, Cys-703–Cys-717, and Cys-704–Cys-729. Residue Ser-647 is glycosylated (O-linked (Glc) serine). The 53-residue stretch at 677–729 (GPCYRLVSSGRQCMHPLSVHLTKQLCCCSVGKAWGPHCEKCPLPGTAAFKEIC) folds into the TB 2 domain. The interval 750–811 (VGKGPVFVKP…APPEKEIPSL (62 aa)) is disordered. O-linked (GalNAc...) threonine glycans are attached at residues Thr-769 and Thr-801. One can recognise an EGF-like 4; calcium-binding domain in the interval 873-910 (EINECTVNPDICGAGHCINLPVRYTCICYEGYRFSEQQ). 29 disulfide bridges follow: Cys-877–Cys-889, Cys-884–Cys-898, Cys-900–Cys-913, Cys-919–Cys-931, Cys-926–Cys-940, Cys-942–Cys-955, Cys-961–Cys-972, Cys-967–Cys-981, Cys-984–Cys-996, Cys-1002–Cys-1013, Cys-1008–Cys-1022, Cys-1025–Cys-1036, Cys-1042–Cys-1053, Cys-1048–Cys-1062, Cys-1064–Cys-1077, Cys-1083–Cys-1094, Cys-1089–Cys-1103, Cys-1105–Cys-1118, Cys-1124–Cys-1135, Cys-1130–Cys-1144, Cys-1146–Cys-1159, Cys-1165–Cys-1177, Cys-1172–Cys-1186, Cys-1188–Cys-1200, Cys-1206–Cys-1218, Cys-1212–Cys-1227, Cys-1229–Cys-1242, Cys-1248–Cys-1260, and Cys-1254–Cys-1269. Positions 915-956 (DIDECTQVQHLCSQGRCENTEGSFLCICPAGFMASEEGTNCI) constitute an EGF-like 5; calcium-binding domain. O-linked (Glc) serine glycosylation is present at Ser-937. An EGF-like 6; calcium-binding domain is found at 957–997 (DVDECLRPDVCGEGHCVNTVGAFRCEYCDSGYRMTQRGRCE). A (3R)-3-hydroxyasparagine modification is found at Asn-974. Positions 998–1037 (DIDECLNPSTCPDEQCVNSPGSYQCVPCTEGFRGWNGQCL) constitute an EGF-like 7; calcium-binding domain. Ser-1019 carries O-linked (Glc) serine glycosylation. Residues 1038 to 1078 (DVDECLEPNVCANGDCSNLEGSYMCSCHKGYTRTPDHKHCR) enclose the EGF-like 8; calcium-binding domain. O-linked (Glc) serine glycosylation is present at Ser-1059. Residues 1079 to 1119 (DIDECQQGNLCVNGQCKNTEGSFRCTCGQGYQLSAAKDQCE) enclose the EGF-like 9; calcium-binding domain. Residues 1120–1160 (DIDECQHRHLCAHGQCRNTEGSFQCVCDQGYRASGLGDHCE) form the EGF-like 10; calcium-binding domain. The residue at position 1137 (Asn-1137) is a (3R)-3-hydroxyasparagine. Residue Ser-1141 is glycosylated (O-linked (Glc) serine). An EGF-like 11; calcium-binding domain is found at 1161-1201 (DINECLEDKSVCQRGDCINTAGSYDCTCPDGFQLDDNKTCQ). Positions 1174-1176 (RGD) match the Cell attachment site motif. N-linked (GlcNAc...) asparagine glycosylation occurs at Asn-1197. In terms of domain architecture, EGF-like 12; calcium-binding spans 1202–1243 (DINECEHPGLCGPQGECLNTEGSFHCVCQQGFSISADGRTCE). O-linked (Glc) serine glycosylation occurs at Ser-1224. The EGF-like 13; calcium-binding domain maps to 1244 to 1281 (DIDECVNNTVCDSHGFCDNTAGSFRCLCYQGFQAPQDG). Asn-1250 carries an N-linked (GlcNAc...) asparagine glycan. The EGF-like 14; calcium-binding domain maps to 1286–1328 (DVNECELLSGVCGEAFCENVEGSFLCVCADENQEYSPMTGQCR). The tract at residues 1344–1411 (EEKKECYYNL…PKGKGFVPAG (68 aa)) is 8-Cys3 region. Positions 1347-1401 (KECYYNLNDASLCDNVLAPNVTKQECCCTSGVGWGDNCEIFPCPVLGTAEFTEMC) constitute a TB 3 domain. 4 cysteine pairs are disulfide-bonded: Cys-1349-Cys-1372, Cys-1359-Cys-1384, Cys-1373-Cys-1389, and Cys-1374-Cys-1401. Asn-1366 carries an N-linked (GlcNAc...) asparagine glycan. Phosphoserine; by FAM20C is present on Ser-1414. Positions 1424 to 1466 (DADECLLFGQEICKNGFCLNTRPGYECYCKQGTYYDPVKLQCF) constitute an EGF-like 15; calcium-binding domain. The EGF-like 16; calcium-binding domain occupies 1467–1503 (DMDECQDPSSCIDGQCVNTEGSYNCFCTHPMVLDASE). Disulfide bonds link Cys-1471-Cys-1482, Cys-1477-Cys-1491, Cys-1526-Cys-1550, Cys-1536-Cys-1562, Cys-1551-Cys-1565, and Cys-1552-Cys-1577. A glycan (O-linked (Glc) serine) is linked at Ser-1488. The segment at 1507–1721 (IRPAESNEQI…LNLEKDSDLE (215 aa)) is C-terminal domain. In terms of domain architecture, TB 4 spans 1524 to 1577 (DLCWEHLSDEYVCSRPLVGKQTTYTECCCLYGEAWGMQCALCPLKDSDDYAQLC). A phosphoserine mark is found at Ser-1597 and Ser-1616. The 37-residue stretch at 1621–1657 (QAEECGILNGCENGRCVRVQEGYTCDCFDGYHLDTAK) folds into the EGF-like 17 domain. 5 disulfides stabilise this stretch: Cys-1625-Cys-1636, Cys-1631-Cys-1645, Cys-1666-Cys-1681, Cys-1676-Cys-1690, and Cys-1692-Cys-1705. The EGF-like 18; calcium-binding domain occupies 1662 to 1706 (DVNECDELNNRMSLCKNAKCINTDGSYKCLCLPGYVPSDKPNYCT). Residue Ser-1687 is glycosylated (O-linked (Glc) serine).

It belongs to the LTBP family. As to quaternary structure, interacts with TGFB1; associates via disulfide bonds with the Latency-associated peptide chain (LAP) regulatory chain of TGFB1, leading to regulate activation of TGF-beta-1. LTBP1 does not bind directly to TGF-beta-1, the active chain of TGFB1. Interacts (via C-terminal domain) with FBN1 (via N-terminal domain). Interacts with FBN2. Interacts with ADAMTSL2. Interacts with EFEMP2. Contains hydroxylated asparagine residues. Post-translationally, isoform Short N-terminus is blocked. In terms of processing, two intrachain disulfide bonds from the TB3 domain are rearranged upon TGFB1 binding, and form interchain bonds with TGFB1 propeptide, anchoring it to the extracellular matrix. O-glycosylated on serine residues by POGLUT2 and POGLUT3. In terms of tissue distribution, expressed in the aorta (at protein level). Isoform Long: Expressed in fibroblasts.

It localises to the secreted. The protein resides in the extracellular space. Its subcellular location is the extracellular matrix. Its function is as follows. Key regulator of transforming growth factor beta (TGFB1, TGFB2 and TGFB3) that controls TGF-beta activation by maintaining it in a latent state during storage in extracellular space. Associates specifically via disulfide bonds with the Latency-associated peptide (LAP), which is the regulatory chain of TGF-beta, and regulates integrin-dependent activation of TGF-beta. Outcompeted by LRRC32/GARP for binding to LAP regulatory chain of TGF-beta. In Homo sapiens (Human), this protein is Latent-transforming growth factor beta-binding protein 1.